The following is a 227-amino-acid chain: Claudin-15 (227 aa).

Residue Met1 is a topological domain, cytoplasmic. A helical transmembrane segment spans residues 2 to 24 (SIAVETFGFFMSALGLLMLGVTL). The Extracellular portion of the chain corresponds to 25-74 (PNSYWRVSTVHGNVITTNTIFENLWYSCATDSLGVSNCWDFPSMLALSGY). A disulfide bridge connects residues Cys52 and Cys62. The chain crosses the membrane as a helical span at residues 75 to 99 (VQGCRALMITAILLGFLGLFLGMVG). Residues 100–115 (LRCTNVGNIDLSRKAK) lie on the Cytoplasmic side of the membrane. Ser111 is subject to Phosphoserine. A helical transmembrane segment spans residues 116-140 (LLAIAGAFHILAGACGMVAISWYAV). At 141 to 159 (NITTDFFNPLYVGTKYELG) the chain is on the extracellular side. An important for the formation of tight-junction strand-like structures region spans residues 146–147 (FF). A helical membrane pass occupies residues 160–182 (SALYLGWSASLLSILGGICVFST). Topologically, residues 183–227 (CCCDSKEDPATRVGLPYKPSTVVTARATSDESDVSFGKYGKNAYV) are cytoplasmic. Phosphoserine is present on residues Ser211, Ser214, and Ser217.

This sequence belongs to the claudin family. Can form homo- and heteropolymeric tight junction strands. Post-translationally, palmitoylated. As to expression, detected in kidney, jejunum and colon (at protein level).

It is found in the cell junction. Its subcellular location is the tight junction. The protein resides in the cell membrane. The enzyme catalyses Na(+)(in) = Na(+)(out). The catalysed reaction is K(+)(in) = K(+)(out). It catalyses the reaction Cs(+)(in) = Cs(+)(out). It carries out the reaction Rb(+)(in) = Rb(+)(out). The enzyme catalyses Li(+)(in) = Li(+)(out). The catalysed reaction is NH4(+)(in) = NH4(+)(out). It catalyses the reaction methylamine(out) = methylamine(in). It carries out the reaction H2O(in) = H2O(out). Its function is as follows. Forms paracellular channels: polymerizes in tight junction strands with cation- and water-selective channels through the strands, conveying epithelial permeability in a process known as paracellular tight junction permeability. In intestinal epithelium, allows for sodium and water fluxes from the peritoneal side to the lumen of the intestine to regulate nutrient absorption and intestinal morphogenesis. This chain is Claudin-15, found in Rattus norvegicus (Rat).